Here is a 364-residue protein sequence, read N- to C-terminus: UDP-N-acetylglucosamine--N-acetylmuramyl-(pentapeptide) pyrophosphoryl-undecaprenol N-acetylglucosamine transferase (364 aa).

Residues 10–12, N124, S195, and Q295 contribute to the UDP-N-acetyl-alpha-D-glucosamine site; that span reads TGG.

This sequence belongs to the glycosyltransferase 28 family. MurG subfamily.

The protein localises to the cell membrane. It catalyses the reaction di-trans,octa-cis-undecaprenyl diphospho-N-acetyl-alpha-D-muramoyl-L-alanyl-D-glutamyl-meso-2,6-diaminopimeloyl-D-alanyl-D-alanine + UDP-N-acetyl-alpha-D-glucosamine = di-trans,octa-cis-undecaprenyl diphospho-[N-acetyl-alpha-D-glucosaminyl-(1-&gt;4)]-N-acetyl-alpha-D-muramoyl-L-alanyl-D-glutamyl-meso-2,6-diaminopimeloyl-D-alanyl-D-alanine + UDP + H(+). The protein operates within cell wall biogenesis; peptidoglycan biosynthesis. Its function is as follows. Cell wall formation. Catalyzes the transfer of a GlcNAc subunit on undecaprenyl-pyrophosphoryl-MurNAc-pentapeptide (lipid intermediate I) to form undecaprenyl-pyrophosphoryl-MurNAc-(pentapeptide)GlcNAc (lipid intermediate II). This is UDP-N-acetylglucosamine--N-acetylmuramyl-(pentapeptide) pyrophosphoryl-undecaprenol N-acetylglucosamine transferase from Bacillus pumilus (strain SAFR-032).